Consider the following 307-residue polypeptide: MLQRTLAKSISVTGVGLHSGERVALTLHPAPENSGISFRRTDLDGEMGEQIKLTPYLINDTRLSSTIVTDKGVRVGTIEHIMSALSAYGIDNALIELNAPEIPIMDGSSLPFIYLLQDAGVVDQKAQKRFLKILKPVEIKEAGKWVRFTPYDGFKVTLTIEFDHPAFNRSSPTFEIDFAGKSYIDEIARARTFGFMHEVEMMRAHNLGLGGNLNNAIVIDDTDVLNPEGLRYPDEFVRHKILDAIGDLYIVGHPIVGAFEGYKSGHAINNALLRAVLADETAYDRVEFADSDDLPDAFHELNIRNCG.

Zn(2+) is bound by residues H80, H239, and D243. The active-site Proton donor is H266.

This sequence belongs to the LpxC family. Requires Zn(2+) as cofactor.

The catalysed reaction is a UDP-3-O-[(3R)-3-hydroxyacyl]-N-acetyl-alpha-D-glucosamine + H2O = a UDP-3-O-[(3R)-3-hydroxyacyl]-alpha-D-glucosamine + acetate. Its pathway is glycolipid biosynthesis; lipid IV(A) biosynthesis; lipid IV(A) from (3R)-3-hydroxytetradecanoyl-[acyl-carrier-protein] and UDP-N-acetyl-alpha-D-glucosamine: step 2/6. Catalyzes the hydrolysis of UDP-3-O-myristoyl-N-acetylglucosamine to form UDP-3-O-myristoylglucosamine and acetate, the committed step in lipid A biosynthesis. The chain is UDP-3-O-acyl-N-acetylglucosamine deacetylase from Neisseria meningitidis serogroup C / serotype 2a (strain ATCC 700532 / DSM 15464 / FAM18).